A 204-amino-acid chain; its full sequence is Large ribosomal subunit protein uL3 (204 aa).

The protein belongs to the universal ribosomal protein uL3 family. In terms of assembly, part of the 50S ribosomal subunit. Forms a cluster with proteins L14 and L19.

One of the primary rRNA binding proteins, it binds directly near the 3'-end of the 23S rRNA, where it nucleates assembly of the 50S subunit. The polypeptide is Large ribosomal subunit protein uL3 (Azobacteroides pseudotrichonymphae genomovar. CFP2).